Here is a 396-residue protein sequence, read N- to C-terminus: MSKEKFERTKPHVNVGTIGHIDHGKTTLTAAITRVLSTKGQASFTDFSDIDKAPEEKERGITIATAHVEYETVNRHYAHVDCPGHADYIKNMITGAAQMDGAILVVAATDGAMPQTREHILLARQVGVPAMVVFLNKCDMVDDDELIELVEMELRELLDDYEFPGDDVPFIHGSALLALENPEDEDKAACIWELMDQIDSYIPEPERDVDQPFLMPVEDVFSISGRGTVATGRVERGIIKVGEEVAIVGVRDTVKTTCTGVEMFRKLLDEGRAGDNIGALLRGVKREDIERGQVLAKPGTITPHTKFKAECYILGKDEGGRHTPFFNGYRPQFYFRTTDVTGIVTLPEGIEMVMPGDNVAVEAELITPIAMDAGLRFAIREGGRTVGAGVISEIIA.

The tr-type G domain occupies 10-206 (KPHVNVGTIG…QIDSYIPEPE (197 aa)). Residues 19-26 (GHIDHGKT) are G1. 19 to 26 (GHIDHGKT) contacts GTP. Residue Thr26 coordinates Mg(2+). The segment at 60-64 (GITIA) is G2. The tract at residues 81 to 84 (DCPG) is G3. GTP is bound by residues 81 to 85 (DCPGH) and 136 to 139 (NKCD). A G4 region spans residues 136-139 (NKCD). Residues 174 to 176 (SAL) form a G5 region.

This sequence belongs to the TRAFAC class translation factor GTPase superfamily. Classic translation factor GTPase family. EF-Tu/EF-1A subfamily. As to quaternary structure, monomer.

Its subcellular location is the cytoplasm. The enzyme catalyses GTP + H2O = GDP + phosphate + H(+). In terms of biological role, GTP hydrolase that promotes the GTP-dependent binding of aminoacyl-tRNA to the A-site of ribosomes during protein biosynthesis. The protein is Elongation factor Tu 1 of Desulfotalea psychrophila (strain LSv54 / DSM 12343).